The sequence spans 545 residues: Chaperonin GroEL (545 aa).

ATP is bound by residues 30–33 (TLGP), lysine 51, 87–91 (DGTTT), glycine 415, 479–481 (NAA), and aspartate 495.

The protein belongs to the chaperonin (HSP60) family. As to quaternary structure, forms a cylinder of 14 subunits composed of two heptameric rings stacked back-to-back. Interacts with the co-chaperonin GroES.

It is found in the cytoplasm. The catalysed reaction is ATP + H2O + a folded polypeptide = ADP + phosphate + an unfolded polypeptide.. In terms of biological role, together with its co-chaperonin GroES, plays an essential role in assisting protein folding. The GroEL-GroES system forms a nano-cage that allows encapsulation of the non-native substrate proteins and provides a physical environment optimized to promote and accelerate protein folding. The polypeptide is Chaperonin GroEL (Cellvibrio japonicus (strain Ueda107) (Pseudomonas fluorescens subsp. cellulosa)).